The sequence spans 672 residues: GPI mannosyltransferase pigv-1 (672 aa).

The Cytoplasmic portion of the chain corresponds to 1-134; it reads MRRREPGRDV…TQRCLGFCFR (134 aa). The span at 82-94 shows a compositional bias: basic and acidic residues; that stretch reads REESDSSSSREDS. The interval 82–115 is disordered; that stretch reads REESDSSSSREDSPLGSTETGESCSTTDDEESKE. Residues 97 to 107 are compositionally biased toward low complexity; sequence GSTETGESCST. The helical transmembrane segment at 135–155 threads the bilayer; it reads QLFFSRMWVFILQFIASYYAG. Over 156–239 the chain is Extracellular; sequence DRFRTDGFNL…NGMESVFGWT (84 aa). Residues 240-260 traverse the membrane as a helical segment; the sequence is FPPWVTITLAAVFVNLFCFLL. Residues 261-277 lie on the Cytoplasmic side of the membrane; sequence CGMTLYQVVLIMTRSVK. A run of 2 helical transmembrane segments spans residues 278 to 298 and 299 to 319; these read ISLL…FSSA and YSES…LFGL. Topologically, residues 320 to 345 are extracellular; that stretch reads RGKGFWHRMLKGFTGTICFGLTFAVR. The chain crosses the membrane as a helical span at residues 346 to 366; the sequence is SNGLLNFLYVAWIWCGTLLWD. The Cytoplasmic segment spans residues 367-423; sequence EEMPIPDCHKLISTLAATKNERYKQEWQAKFWRFQQKRKQNRKVFRWTDPNFSRCVT. Residues 424–444 traverse the membrane as a helical segment; the sequence is LFIVIVCAISATLLFFTPYVF. Residues 445–520 are Extracellular-facing; the sequence is MTNFTADEFC…WSVKFFGYWK (76 aa). Residues 521 to 541 form a helical membrane-spanning segment; it reads IKKIPCFLMMLPAAILTVLAI. The Cytoplasmic portion of the chain corresponds to 542 to 569; it reads KSSWNDVFLNKRWNNIWVLTARSDHSLP. Residues 570–590 traverse the membrane as a helical segment; the sequence is MAIHSSVLLFVAIFYINSEVF. Residues 591-592 lie on the Extracellular side of the membrane; that stretch reads TR. Residues 593–613 form a helical membrane-spanning segment; sequence IIFSSSPFIYIYIATYIDKLT. Residues 614-648 lie on the Cytoplasmic side of the membrane; that stretch reads QGTIAGNRLWQYFESPGILPFFVFRRVWQDGWRGK. The chain crosses the membrane as a helical span at residues 649–669; that stretch reads LLYIYILGYFVFGTMAHSAWL. Topologically, residues 670-672 are extracellular; sequence PFT.

Belongs to the PIGV family. In terms of tissue distribution, expressed in epithelial tissues including the epidermis, pharynx, intestine, rectum and excretory cell during embryogenesis.

Its subcellular location is the endoplasmic reticulum membrane. It functions in the pathway glycolipid biosynthesis; glycosylphosphatidylinositol-anchor biosynthesis. Its function is as follows. Alpha-1,6-mannosyltransferase involved in glycosylphosphatidylinositol-anchor biosynthesis. Transfers the second mannose to the glycosylphosphatidylinositol during GPI precursor assembly. Required for maintenance of epithelial integrity during embryogenesis. The sequence is that of GPI mannosyltransferase pigv-1 from Caenorhabditis elegans.